The following is a 403-amino-acid chain: Argininosuccinate synthase (403 aa).

Residue 9–17 (AYSGGLDTS) participates in ATP binding. Y86 serves as a coordination point for L-citrulline. An ATP-binding site is contributed by G116. T118, N122, and D123 together coordinate L-aspartate. N122 lines the L-citrulline pocket. Positions 126, 174, 183, 259, and 271 each coordinate L-citrulline.

Belongs to the argininosuccinate synthase family. Type 1 subfamily. As to quaternary structure, homotetramer.

The protein resides in the cytoplasm. The catalysed reaction is L-citrulline + L-aspartate + ATP = 2-(N(omega)-L-arginino)succinate + AMP + diphosphate + H(+). Its pathway is amino-acid biosynthesis; L-arginine biosynthesis; L-arginine from L-ornithine and carbamoyl phosphate: step 2/3. The polypeptide is Argininosuccinate synthase (Shouchella clausii (strain KSM-K16) (Alkalihalobacillus clausii)).